Here is a 440-residue protein sequence, read N- to C-terminus: Chitinase-like protein Idgf5 (440 aa).

The first 27 residues, 1–27 (MRNKMIYFNFHLFVIIFANLQIFQVQA), serve as a signal peptide directing secretion. Positions 28–439 (ANIFCYYDTQ…KSIHNAFKKF (412 aa)) constitute a GH18 domain. Residues Cys32 and Cys56 are joined by a disulfide bond. Asn126, Asn283, and Asn403 each carry an N-linked (GlcNAc...) asparagine glycan. The cysteines at positions 340 and 421 are disulfide-linked.

The protein belongs to the glycosyl hydrolase 18 family. IDGF subfamily. Glycosylated.

It is found in the secreted. Its function is as follows. Cooperates with insulin-like peptides to stimulate the proliferation, polarization and motility of imaginal disk cells. May act by stabilizing the binding of insulin-like peptides to its receptor through a simultaneous interaction with both molecules to form a multiprotein signaling complex. The protein is Chitinase-like protein Idgf5 (Idgf5) of Glossina morsitans morsitans (Savannah tsetse fly).